Reading from the N-terminus, the 573-residue chain is Protein DSE1 (573 aa).

WD repeat units follow at residues 144-185, 315-351, 356-395, and 397-448; these read DFPP…GCAK, RKNTSLDCVWISNHHVAQSLNDKIQIWDIQSCDGKPV, AKKGYIESLKFNENTGALYSSDDQGFVICWDLQNLQNMKY, and ELVH…NGKG. The span at 500–509 shows a compositional bias: low complexity; the sequence is SDSSMLSLSN. Residues 500–519 form a disordered region; it reads SDSSMLSLSNESDHSMTETS. K553 participates in a covalent cross-link: Glycyl lysine isopeptide (Lys-Gly) (interchain with G-Cter in ubiquitin).

The protein belongs to the WD repeat DSE1 family.

The protein resides in the bud neck. Its function is as follows. Involved in cell wall metabolism and required for the separation of the mother and daughter cells. This is Protein DSE1 (DSE1) from Saccharomyces cerevisiae (strain ATCC 204508 / S288c) (Baker's yeast).